A 541-amino-acid chain; its full sequence is Cytochrome P450 monooxygenase claW (541 aa).

Residues 12-32 form a helical membrane-spanning segment; it reads VINALVILFSFWAFLSLIRVI. Cys-480 contributes to the heme binding site.

It belongs to the cytochrome P450 family. The cofactor is heme.

The protein localises to the membrane. It functions in the pathway secondary metabolite biosynthesis; terpenoid biosynthesis. In terms of biological role, cytochrome P450 monooxygenase; part of the gene cluster that mediates the biosynthesis of clavilactone A, a meroterpenoid that features a unique benzo-fused ten-membered carbocyclic ring unit with an alpha,beta-epoxy-gamma-lactone moiety, forming an intriguing 10/5/3 tricyclic nested skeleton. Cytochrome P450 monooxygenases claO, claP, claQ, claU, and claW are close orthologs, suggesting that a redundant function or pseudogenes are present in the cla cluster. These monoxygenases are not involved in clavilactone A biosynthesis nor its modification. ClaR, ClaS and ClaT are sufficient to produce clavilactone A. The biosynthesis begins with the prenyltransferase claS that transfers geranyl pyrophosphate (GPP) to hydroquinone to produces geranylhydroquinone. The cytochrome P450 monooxygenase claR then catalyzes the diradical coupling reaction between the intramolecular hydroquinone and allyl moieties to form the benzo-fused ten-membered carbocyclic ring unit of wigantol. Finally the cytochrome P450 monooxygenase claT exquisitely and stereoselectively assembles the alpha,beta-epoxy-gamma-lactone moiety, producing clavilactone A via arnebinol A. This Ampulloclitocybe clavipes (Club foot) protein is Cytochrome P450 monooxygenase claW.